Here is a 469-residue protein sequence, read N- to C-terminus: 3-isopropylmalate dehydratase large subunit (469 aa).

[4Fe-4S] cluster-binding residues include Cys-347, Cys-408, and Cys-411.

Belongs to the aconitase/IPM isomerase family. LeuC type 1 subfamily. Heterodimer of LeuC and LeuD. [4Fe-4S] cluster is required as a cofactor.

The enzyme catalyses (2R,3S)-3-isopropylmalate = (2S)-2-isopropylmalate. It functions in the pathway amino-acid biosynthesis; L-leucine biosynthesis; L-leucine from 3-methyl-2-oxobutanoate: step 2/4. In terms of biological role, catalyzes the isomerization between 2-isopropylmalate and 3-isopropylmalate, via the formation of 2-isopropylmaleate. The protein is 3-isopropylmalate dehydratase large subunit of Actinobacillus pleuropneumoniae serotype 3 (strain JL03).